The chain runs to 84 residues: Small ribosomal subunit protein uS17 (84 aa).

This sequence belongs to the universal ribosomal protein uS17 family. Part of the 30S ribosomal subunit.

One of the primary rRNA binding proteins, it binds specifically to the 5'-end of 16S ribosomal RNA. In Alkaliphilus oremlandii (strain OhILAs) (Clostridium oremlandii (strain OhILAs)), this protein is Small ribosomal subunit protein uS17.